The primary structure comprises 305 residues: Oxygen-dependent coproporphyrinogen-III oxidase (305 aa).

Residue S93 coordinates substrate. Positions 97 and 107 each coordinate a divalent metal cation. The active-site Proton donor is the H107. 109–111 (NVR) lines the substrate pocket. Positions 146 and 176 each coordinate a divalent metal cation. The segment at 241 to 276 (YVEFNLVYDRGTLFGLQSGGRTESILMSLPPQVRWG) is important for dimerization. 259-261 (GGR) provides a ligand contact to substrate.

The protein belongs to the aerobic coproporphyrinogen-III oxidase family. As to quaternary structure, homodimer. A divalent metal cation is required as a cofactor.

It is found in the cytoplasm. The catalysed reaction is coproporphyrinogen III + O2 + 2 H(+) = protoporphyrinogen IX + 2 CO2 + 2 H2O. Its pathway is porphyrin-containing compound metabolism; protoporphyrin-IX biosynthesis; protoporphyrinogen-IX from coproporphyrinogen-III (O2 route): step 1/1. In terms of biological role, involved in the heme biosynthesis. Catalyzes the aerobic oxidative decarboxylation of propionate groups of rings A and B of coproporphyrinogen-III to yield the vinyl groups in protoporphyrinogen-IX. The polypeptide is Oxygen-dependent coproporphyrinogen-III oxidase (Pseudomonas fluorescens (strain ATCC BAA-477 / NRRL B-23932 / Pf-5)).